The following is a 241-amino-acid chain: UDP-2,3-diacylglucosamine hydrolase (241 aa).

Asp-8, His-10, Asp-41, Asn-79, and His-114 together coordinate Mn(2+). 79–80 (NR) lines the substrate pocket. Residues Asp-122, Ser-160, Asn-164, Lys-167, and His-195 each contribute to the substrate site. Residues His-195 and His-197 each contribute to the Mn(2+) site.

It belongs to the LpxH family. The cofactor is Mn(2+).

The protein resides in the cell inner membrane. The catalysed reaction is UDP-2-N,3-O-bis[(3R)-3-hydroxytetradecanoyl]-alpha-D-glucosamine + H2O = 2-N,3-O-bis[(3R)-3-hydroxytetradecanoyl]-alpha-D-glucosaminyl 1-phosphate + UMP + 2 H(+). Its pathway is glycolipid biosynthesis; lipid IV(A) biosynthesis; lipid IV(A) from (3R)-3-hydroxytetradecanoyl-[acyl-carrier-protein] and UDP-N-acetyl-alpha-D-glucosamine: step 4/6. In terms of biological role, hydrolyzes the pyrophosphate bond of UDP-2,3-diacylglucosamine to yield 2,3-diacylglucosamine 1-phosphate (lipid X) and UMP by catalyzing the attack of water at the alpha-P atom. Involved in the biosynthesis of lipid A, a phosphorylated glycolipid that anchors the lipopolysaccharide to the outer membrane of the cell. The sequence is that of UDP-2,3-diacylglucosamine hydrolase from Aeromonas hydrophila subsp. hydrophila (strain ATCC 7966 / DSM 30187 / BCRC 13018 / CCUG 14551 / JCM 1027 / KCTC 2358 / NCIMB 9240 / NCTC 8049).